The chain runs to 134 residues: uncharacterized protein (134 aa).

A run of 3 helical transmembrane segments spans residues 9–29 (PYFL…HGTA), 49–69 (MLLV…LGLF), and 107–127 (ALLY…ACAL).

The protein belongs to the DoxX family.

The protein resides in the cell membrane. This is an uncharacterized protein from Haemophilus influenzae (strain ATCC 51907 / DSM 11121 / KW20 / Rd).